Reading from the N-terminus, the 499-residue chain is Rhamnogalacturonan I rhamnosyltransferase 1 (499 aa).

Residues 31–50 (WFVRVCSSILVWTCLVQLFA) traverse the membrane as a helical; Signal-anchor for type II membrane protein segment. N-linked (GlcNAc...) asparagine glycosylation is found at Asn-88, Asn-121, and Asn-207. 261-263 (HLR) lines the substrate pocket. Asn-375, Asn-435, and Asn-496 each carry an N-linked (GlcNAc...) asparagine glycan.

The protein belongs to the glycosyltransferase GT106 family.

The protein localises to the golgi apparatus membrane. It carries out the reaction alpha-D-galacturonosyl-[(1-&gt;2)-alpha-L-rhamnosyl-(1-&gt;4)-alpha-D-galacturonosyl](n) + UDP-beta-L-rhamnose = [(1-&gt;2)-alpha-L-rhamnosyl-(1-&gt;4)-alpha-D-galacturonosyl](n+1) + UDP + H(+). It functions in the pathway glycan metabolism; pectin biosynthesis. Glycosyltransferase involved in the formation of rhamnogalacturonan I (RG-I) oligosaccharides in the seed coat mucilage, which is a specialized cell wall with abundant RG-I. Transfers the rhamnose residue from UDP-beta-L-rhamnose to RG-I oligosaccharides. The protein is Rhamnogalacturonan I rhamnosyltransferase 1 of Arabidopsis thaliana (Mouse-ear cress).